Here is a 968-residue protein sequence, read N- to C-terminus: Translation initiation factor IF-2 (968 aa).

A compositionally biased stretch (low complexity) spans 51-76 (PAAGASKSEAPAAAPKAPASPAATRP). Residues 51–369 (PAAGASKSEA…GVSVPRGDGN (319 aa)) form a disordered region. Over residues 77–87 (APAPGPAAPKA) the composition is skewed to pro residues. Low complexity predominate over residues 93 to 102 (EAPAAASAPS). Over residues 103 to 112 (APAPAAPAPA) the composition is skewed to pro residues. Low complexity-rich tracts occupy residues 113–122 (APAAAASAPS), 128–170 (APST…GNNP), and 239–254 (GARPGAPRPAGAPGAR). A compositionally biased stretch (gly residues) spans 281 to 336 (GRPGGGGRGPGRPGGAPGTGGAPGAGGGAPAGGGFGKGGRGRGGTQGAFGKGGAGR). The span at 337–346 (GKQRKSKRAK) shows a compositional bias: basic residues. The region spanning 461–632 (ARPPVVTVMG…AVLLTADAAL (172 aa)) is the tr-type G domain. The G1 stretch occupies residues 470–477 (GHVDHGKT). GTP is bound at residue 470 to 477 (GHVDHGKT). Residues 495-499 (GITQH) are G2. A G3 region spans residues 520–523 (DTPG). Residues 520-524 (DTPGH) and 574-577 (NKID) contribute to the GTP site. Positions 574 to 577 (NKID) are G4. The tract at residues 610–612 (SAR) is G5.

The protein belongs to the TRAFAC class translation factor GTPase superfamily. Classic translation factor GTPase family. IF-2 subfamily.

The protein resides in the cytoplasm. Functionally, one of the essential components for the initiation of protein synthesis. Protects formylmethionyl-tRNA from spontaneous hydrolysis and promotes its binding to the 30S ribosomal subunits. Also involved in the hydrolysis of GTP during the formation of the 70S ribosomal complex. The polypeptide is Translation initiation factor IF-2 (Arthrobacter sp. (strain FB24)).